Here is a 386-residue protein sequence, read N- to C-terminus: Probable Xaa-Pro aminopeptidase PMAA_074180 (386 aa).

Mn(2+)-binding residues include aspartate 160, aspartate 171, glutamate 311, and glutamate 350.

It belongs to the peptidase M24B family. Mn(2+) serves as cofactor.

It carries out the reaction Release of any N-terminal amino acid, including proline, that is linked to proline, even from a dipeptide or tripeptide.. Its function is as follows. Catalyzes the removal of a penultimate prolyl residue from the N-termini of peptides. The sequence is that of Probable Xaa-Pro aminopeptidase PMAA_074180 from Talaromyces marneffei (strain ATCC 18224 / CBS 334.59 / QM 7333) (Penicillium marneffei).